A 478-amino-acid chain; its full sequence is Glutamate--tRNA ligase 1 (478 aa).

The 'HIGH' region motif lies at 10–20 (PSPTGFLHIGG). The short motif at 242–246 (KLSKR) is the 'KMSKS' region element. Position 245 (K245) interacts with ATP.

This sequence belongs to the class-I aminoacyl-tRNA synthetase family. Glutamate--tRNA ligase type 1 subfamily. Monomer.

It is found in the cytoplasm. The catalysed reaction is tRNA(Glu) + L-glutamate + ATP = L-glutamyl-tRNA(Glu) + AMP + diphosphate. Its function is as follows. Catalyzes the attachment of glutamate to tRNA(Glu) in a two-step reaction: glutamate is first activated by ATP to form Glu-AMP and then transferred to the acceptor end of tRNA(Glu). The polypeptide is Glutamate--tRNA ligase 1 (Orientia tsutsugamushi (strain Boryong) (Rickettsia tsutsugamushi)).